Consider the following 140-residue polypeptide: Putative pre-16S rRNA nuclease (140 aa).

It belongs to the YqgF nuclease family.

The protein resides in the cytoplasm. In terms of biological role, could be a nuclease involved in processing of the 5'-end of pre-16S rRNA. This is Putative pre-16S rRNA nuclease from Halothermothrix orenii (strain H 168 / OCM 544 / DSM 9562).